A 210-amino-acid chain; its full sequence is 2-Cys peroxiredoxin BAS1, chloroplastic (210 aa).

The N-terminal 10 residues, 1–10 (DARARSFVAR), are a transit peptide targeting the chloroplast. Positions 18 to 177 (PLVGNKAPDF…TLRTLQALQY (160 aa)) constitute a Thioredoxin domain. Catalysis depends on C64, which acts as the Cysteine sulfenic acid (-SOH) intermediate.

It belongs to the peroxiredoxin family. AhpC/Prx1 subfamily. As to quaternary structure, homodimer; disulfide-linked, upon oxidation. As to expression, expressed in leaf blade, sheath, basiplast, stem and green spike. Maximal expression in young developing shoots segments where cell division and elongation take place. Not expressed in roots.

It is found in the plastid. Its subcellular location is the chloroplast. The catalysed reaction is a hydroperoxide + [thioredoxin]-dithiol = an alcohol + [thioredoxin]-disulfide + H2O. In terms of biological role, thiol-specific peroxidase that catalyzes the reduction of hydrogen peroxide and organic hydroperoxides to water and alcohols, respectively. Plays a role in cell protection against oxidative stress by detoxifying peroxides. May be an antioxidant enzyme particularly in the developing shoot and photosynthesizing leaf. In Hordeum vulgare (Barley), this protein is 2-Cys peroxiredoxin BAS1, chloroplastic (BAS1).